A 352-amino-acid chain; its full sequence is Beta-1,4-xylanase (352 aa).

An N-terminal signal peptide occupies residues 1–23 (MINQRFSILVLLLILLTFSLGFL). In terms of domain architecture, GH10 spans 29 to 352 (GMEIPSLKEV…KKAFWEIVKF (324 aa)). Glu155 (proton donor) is an active-site residue. Glu262 acts as the Nucleophile in catalysis.

Belongs to the glycosyl hydrolase 10 (cellulase F) family.

The protein resides in the secreted. The catalysed reaction is Endohydrolysis of (1-&gt;4)-beta-D-xylosidic linkages in xylans.. It participates in glycan degradation; xylan degradation. The sequence is that of Beta-1,4-xylanase (xynA) from Dictyoglomus thermophilum.